A 114-amino-acid polypeptide reads, in one-letter code: UPF0145 protein SSO1976 (114 aa).

The protein belongs to the UPF0145 family.

The polypeptide is UPF0145 protein SSO1976 (Saccharolobus solfataricus (strain ATCC 35092 / DSM 1617 / JCM 11322 / P2) (Sulfolobus solfataricus)).